Reading from the N-terminus, the 613-residue chain is RNA polymerase sigma factor RpoD (613 aa).

The sigma-70 factor domain-1 stretch occupies residues 2–80 (EQNPQSQLKL…TADEDAAEAA (79 aa)). Residues 176–213 (PTATHVGSELSQEDLDDDEDEDEEDGDDDSADDDNSID) are disordered. A compositionally biased stretch (acidic residues) spans 186-212 (SQEDLDDDEDEDEEDGDDDSADDDNSI). The sigma-70 factor domain-2 stretch occupies residues 379–449 (MVEANLRLVI…TRSIADQART (71 aa)). Residues 403–406 (DLIQ) carry the Interaction with polymerase core subunit RpoC motif. The segment at 458-534 (ETINKLNRIS…DTTLELPLDS (77 aa)) is sigma-70 factor domain-3. Positions 547-600 (VLAGLTAREAKVLRMRFGIDMNTDYTLEEVGKQFDVTRERIRQIEAKALRKLRH) are sigma-70 factor domain-4. The H-T-H motif DNA-binding region spans 573-592 (LEEVGKQFDVTRERIRQIEA). The interval 584-599 (RERIRQIEAKALRKLR) is interaction with anti-sigma factors.

It belongs to the sigma-70 factor family. RpoD/SigA subfamily. Interacts transiently with the RNA polymerase catalytic core formed by RpoA, RpoB, RpoC and RpoZ (2 alpha, 1 beta, 1 beta' and 1 omega subunit) to form the RNA polymerase holoenzyme that can initiate transcription. Identified in a complex containing RpoD, the RNA polymerase subunits RpoA, RpoB and RpoZ, CRP and DNA. Interacts with Rsd; this prevents interaction with the RNA polymerase catalytic core and with promoter DNA, and as a consequence, promotes transcription from promoters that require alternative sigma factors. Interacts with phage T4 AsiA; this interferes with binding to DNA and to the RNA polymerase. In terms of assembly, (Microbial infection) Interacts with Escherichia phage lambda antitermination protein Q.

It localises to the cytoplasm. In terms of biological role, sigma factors are initiation factors that promote the attachment of RNA polymerase to specific initiation sites and are then released. This sigma factor is the primary sigma factor during exponential growth. Preferentially transcribes genes associated with fast growth, such as ribosomal operons, other protein-synthesis related genes, rRNA- and tRNA-encoding genes and prfB. The sequence is that of RNA polymerase sigma factor RpoD from Escherichia coli (strain K12).